The following is a 331-amino-acid chain: Fructose-1,6-bisphosphatase class 1 (331 aa).

4 residues coordinate Mg(2+): Glu88, Asp108, Leu110, and Asp111. Substrate-binding positions include 111 to 114 (DGSS) and Asn201. Glu273 is a Mg(2+) binding site.

It belongs to the FBPase class 1 family. In terms of assembly, homotetramer. Requires Mg(2+) as cofactor.

The protein resides in the cytoplasm. The catalysed reaction is beta-D-fructose 1,6-bisphosphate + H2O = beta-D-fructose 6-phosphate + phosphate. It functions in the pathway carbohydrate biosynthesis; gluconeogenesis. This chain is Fructose-1,6-bisphosphatase class 1, found in Methylobacillus flagellatus (strain ATCC 51484 / DSM 6875 / VKM B-1610 / KT).